The sequence spans 657 residues: Glycogen debranching enzyme (657 aa).

Catalysis depends on aspartate 336, which acts as the Nucleophile. Residue glutamate 371 is the Proton donor of the active site. A disordered region spans residues 460–479 (ANGEENRDGTNNNYSNNHGK).

This sequence belongs to the glycosyl hydrolase 13 family.

It carries out the reaction Hydrolysis of (1-&gt;6)-alpha-D-glucosidic linkages to branches with degrees of polymerization of three or four glucose residues in limit dextrin.. It participates in glycan degradation; glycogen degradation. Its function is as follows. Removes maltotriose and maltotetraose chains that are attached by 1,6-alpha-linkage to the limit dextrin main chain, generating a debranched limit dextrin. The sequence is that of Glycogen debranching enzyme from Escherichia coli (strain SMS-3-5 / SECEC).